Consider the following 223-residue polypeptide: Ribose-5-phosphate isomerase A (223 aa).

Substrate-binding positions include 32–35 (TGST), 85–88 (DGAD), and 98–101 (KGGG). Glu-107 (proton acceptor) is an active-site residue. Lys-125 is a binding site for substrate.

This sequence belongs to the ribose 5-phosphate isomerase family. Homodimer.

The catalysed reaction is aldehydo-D-ribose 5-phosphate = D-ribulose 5-phosphate. Its pathway is carbohydrate degradation; pentose phosphate pathway; D-ribose 5-phosphate from D-ribulose 5-phosphate (non-oxidative stage): step 1/1. In terms of biological role, catalyzes the reversible conversion of ribose-5-phosphate to ribulose 5-phosphate. The sequence is that of Ribose-5-phosphate isomerase A from Pseudomonas syringae pv. tomato (strain ATCC BAA-871 / DC3000).